Here is a 312-residue protein sequence, read N- to C-terminus: Ribosomal RNA small subunit methyltransferase H (312 aa).

S-adenosyl-L-methionine is bound by residues 33–35 (GGY), Asp51, Phe78, Asp97, and Gln104.

Belongs to the methyltransferase superfamily. RsmH family.

The protein resides in the cytoplasm. It carries out the reaction cytidine(1402) in 16S rRNA + S-adenosyl-L-methionine = N(4)-methylcytidine(1402) in 16S rRNA + S-adenosyl-L-homocysteine + H(+). Its function is as follows. Specifically methylates the N4 position of cytidine in position 1402 (C1402) of 16S rRNA. This is Ribosomal RNA small subunit methyltransferase H from Orientia tsutsugamushi (strain Boryong) (Rickettsia tsutsugamushi).